Consider the following 200-residue polypeptide: Glycerol-3-phosphate acyltransferase (200 aa).

Transmembrane regions (helical) follow at residues 4 to 24 (ALLA…YWVG), 70 to 90 (ALGS…FAVI), 110 to 130 (LGIL…VWLL), and 158 to 178 (QPLP…GAHR).

This sequence belongs to the PlsY family. In terms of assembly, probably interacts with PlsX.

It localises to the cell inner membrane. The enzyme catalyses an acyl phosphate + sn-glycerol 3-phosphate = a 1-acyl-sn-glycero-3-phosphate + phosphate. The protein operates within lipid metabolism; phospholipid metabolism. In terms of biological role, catalyzes the transfer of an acyl group from acyl-phosphate (acyl-PO(4)) to glycerol-3-phosphate (G3P) to form lysophosphatidic acid (LPA). This enzyme utilizes acyl-phosphate as fatty acyl donor, but not acyl-CoA or acyl-ACP. The polypeptide is Glycerol-3-phosphate acyltransferase (Synechococcus sp. (strain JA-2-3B'a(2-13)) (Cyanobacteria bacterium Yellowstone B-Prime)).